The primary structure comprises 687 residues: Macrolide export ATP-binding/permease protein MacB (687 aa).

The 239-residue stretch at 6 to 244 folds into the ABC transporter domain; sequence LKLAAVTRRF…LAEAGVDAAE (239 aa). Residue 42–49 participates in ATP binding; it reads GASGSGKS. Residues 246–256 are compositionally biased toward low complexity; the sequence is AEASEAAVGES. The segment at 246–281 is disordered; sequence AEASEAAVGESPTRNRHDTPAPPAAVDTDPHVDTGT. 4 helical membrane passes run 312 to 332, 560 to 580, 617 to 637, and 650 to 670; these read LLTM…VAIG, LTLL…IGVM, LVCL…GALF, and AGAI…FGFM.

This sequence belongs to the ABC transporter superfamily. Macrolide exporter (TC 3.A.1.122) family. In terms of assembly, homodimer.

It is found in the cell inner membrane. In terms of biological role, non-canonical ABC transporter that contains transmembrane domains (TMD), which form a pore in the inner membrane, and an ATP-binding domain (NBD), which is responsible for energy generation. Confers resistance against macrolides. This is Macrolide export ATP-binding/permease protein MacB from Burkholderia lata (strain ATCC 17760 / DSM 23089 / LMG 22485 / NCIMB 9086 / R18194 / 383).